Consider the following 500-residue polypeptide: Cytochrome P450 71B36 (500 aa).

A helical membrane pass occupies residues 1–21; the sequence is MATILFLSLLFLSCILLAAFT. Cysteine 440 contacts heme.

The protein belongs to the cytochrome P450 family. The cofactor is heme.

It localises to the membrane. The chain is Cytochrome P450 71B36 (CYP71B36) from Arabidopsis thaliana (Mouse-ear cress).